The sequence spans 501 residues: Mitogen-activated protein kinase 16 (501 aa).

One can recognise a Protein kinase domain in the interval 22-313; the sequence is YEVTEVVGKG…AAEALTDPYF (292 aa). ATP contacts are provided by residues 28–36 and Lys51; that span reads VGKGSYGVV. The active-site Proton acceptor is the Asp148. At Thr184 the chain carries Phosphothreonine. A TXY motif is present at residues 184-186; it reads TDY. A Phosphotyrosine modification is found at Tyr186. Positions 477-501 are disordered; the sequence is DEESMSEYMNEAADGVPHKIAQLKT.

It belongs to the protein kinase superfamily. CMGC Ser/Thr protein kinase family. MAP kinase subfamily. Post-translationally, dually phosphorylated on Thr-184 and Tyr-186, which activates the enzyme.

It carries out the reaction L-seryl-[protein] + ATP = O-phospho-L-seryl-[protein] + ADP + H(+). It catalyses the reaction L-threonyl-[protein] + ATP = O-phospho-L-threonyl-[protein] + ADP + H(+). Its activity is regulated as follows. Activated by threonine and tyrosine phosphorylation. The chain is Mitogen-activated protein kinase 16 (MPK16) from Oryza sativa subsp. japonica (Rice).